The primary structure comprises 334 residues: Holliday junction branch migration complex subunit RuvB (334 aa).

Residues 4–184 (ADRLIQPQLQ…FGIPLRLEFY (181 aa)) form a large ATPase domain (RuvB-L) region. ATP contacts are provided by residues Arg24, Gly65, Lys68, Thr69, Thr70, 131 to 133 (EDY), Arg174, Tyr184, and Arg221. Residue Thr69 coordinates Mg(2+). The interval 185–255 (NIKDLSTIVT…VADHALDLLD (71 aa)) is small ATPAse domain (RuvB-S). The head domain (RuvB-H) stretch occupies residues 258–334 (NEGFDYMDRK…YQHFQLIKPE (77 aa)). DNA is bound by residues Arg294, Arg313, and Arg318.

It belongs to the RuvB family. Homohexamer. Forms an RuvA(8)-RuvB(12)-Holliday junction (HJ) complex. HJ DNA is sandwiched between 2 RuvA tetramers; dsDNA enters through RuvA and exits via RuvB. An RuvB hexamer assembles on each DNA strand where it exits the tetramer. Each RuvB hexamer is contacted by two RuvA subunits (via domain III) on 2 adjacent RuvB subunits; this complex drives branch migration. In the full resolvosome a probable DNA-RuvA(4)-RuvB(12)-RuvC(2) complex forms which resolves the HJ.

The protein localises to the cytoplasm. The catalysed reaction is ATP + H2O = ADP + phosphate + H(+). The RuvA-RuvB-RuvC complex processes Holliday junction (HJ) DNA during genetic recombination and DNA repair, while the RuvA-RuvB complex plays an important role in the rescue of blocked DNA replication forks via replication fork reversal (RFR). RuvA specifically binds to HJ cruciform DNA, conferring on it an open structure. The RuvB hexamer acts as an ATP-dependent pump, pulling dsDNA into and through the RuvAB complex. RuvB forms 2 homohexamers on either side of HJ DNA bound by 1 or 2 RuvA tetramers; 4 subunits per hexamer contact DNA at a time. Coordinated motions by a converter formed by DNA-disengaged RuvB subunits stimulates ATP hydrolysis and nucleotide exchange. Immobilization of the converter enables RuvB to convert the ATP-contained energy into a lever motion, pulling 2 nucleotides of DNA out of the RuvA tetramer per ATP hydrolyzed, thus driving DNA branch migration. The RuvB motors rotate together with the DNA substrate, which together with the progressing nucleotide cycle form the mechanistic basis for DNA recombination by continuous HJ branch migration. Branch migration allows RuvC to scan DNA until it finds its consensus sequence, where it cleaves and resolves cruciform DNA. The polypeptide is Holliday junction branch migration complex subunit RuvB (Shewanella sp. (strain W3-18-1)).